The following is a 286-amino-acid chain: Bifunctional protein FolD (286 aa).

NADP(+) is bound by residues 165-167, serine 190, and valine 231; that span reads GRS.

This sequence belongs to the tetrahydrofolate dehydrogenase/cyclohydrolase family. Homodimer.

It carries out the reaction (6R)-5,10-methylene-5,6,7,8-tetrahydrofolate + NADP(+) = (6R)-5,10-methenyltetrahydrofolate + NADPH. It catalyses the reaction (6R)-5,10-methenyltetrahydrofolate + H2O = (6R)-10-formyltetrahydrofolate + H(+). Its pathway is one-carbon metabolism; tetrahydrofolate interconversion. In terms of biological role, catalyzes the oxidation of 5,10-methylenetetrahydrofolate to 5,10-methenyltetrahydrofolate and then the hydrolysis of 5,10-methenyltetrahydrofolate to 10-formyltetrahydrofolate. The polypeptide is Bifunctional protein FolD (Bacillus anthracis (strain A0248)).